The chain runs to 634 residues: uncharacterized protein (634 aa).

An N-terminal signal peptide occupies residues 1–40; that stretch reads MWLQQRLKGLPGLLSSSWARRLLCLLGLLVLLLWFAGSGA. Residues 41–589 are Extracellular-facing; sequence RRAAGGLQLL…DEHMAQQDPG (549 aa). N363 carries an N-linked (GlcNAc...) asparagine glycan. The chain crosses the membrane as a helical span at residues 590–610; the sequence is LPFLFWFSVASLITLFHLFLF. Over 611–634 the chain is Cytoplasmic; the sequence is KLIYNEYCGPGAKPFFRNKEDPSV.

Its subcellular location is the membrane. This is an uncharacterized protein from Bos taurus (Bovine).